Reading from the N-terminus, the 337-residue chain is Phosphate acyltransferase (337 aa).

The protein belongs to the PlsX family. Homodimer. Probably interacts with PlsY.

The protein resides in the cytoplasm. The catalysed reaction is a fatty acyl-[ACP] + phosphate = an acyl phosphate + holo-[ACP]. It participates in lipid metabolism; phospholipid metabolism. In terms of biological role, catalyzes the reversible formation of acyl-phosphate (acyl-PO(4)) from acyl-[acyl-carrier-protein] (acyl-ACP). This enzyme utilizes acyl-ACP as fatty acyl donor, but not acyl-CoA. The protein is Phosphate acyltransferase of Moritella marina (Vibrio marinus).